The chain runs to 192 residues: Acetolactate synthase small subunit (192 aa).

The 75-residue stretch at 29 to 103 (IITVKVRNEM…DTLKVSDLTD (75 aa)) folds into the ACT domain.

This sequence belongs to the acetolactate synthase small subunit family. In terms of assembly, dimer of large and small chains.

The enzyme catalyses 2 pyruvate + H(+) = (2S)-2-acetolactate + CO2. It participates in amino-acid biosynthesis; L-isoleucine biosynthesis; L-isoleucine from 2-oxobutanoate: step 1/4. Its pathway is amino-acid biosynthesis; L-valine biosynthesis; L-valine from pyruvate: step 1/4. The polypeptide is Acetolactate synthase small subunit (ilvH) (Aquifex aeolicus (strain VF5)).